A 478-amino-acid polypeptide reads, in one-letter code: Proline--tRNA ligase (478 aa).

It belongs to the class-II aminoacyl-tRNA synthetase family. ProS type 3 subfamily. Homodimer.

It localises to the cytoplasm. It carries out the reaction tRNA(Pro) + L-proline + ATP = L-prolyl-tRNA(Pro) + AMP + diphosphate. Its function is as follows. Catalyzes the attachment of proline to tRNA(Pro) in a two-step reaction: proline is first activated by ATP to form Pro-AMP and then transferred to the acceptor end of tRNA(Pro). The protein is Proline--tRNA ligase of Oceanobacillus iheyensis (strain DSM 14371 / CIP 107618 / JCM 11309 / KCTC 3954 / HTE831).